A 135-amino-acid chain; its full sequence is Inner membrane protein YgfX (135 aa).

Topologically, residues 1-11 (MVLWQSDLRVS) are cytoplasmic. A not required to inhibit FtsZ or MreB polymerization region spans residues 1–96 (MVLWQSDLRV…APWMIKSGMM (96 aa)). The chain crosses the membrane as a helical span at residues 12–32 (WRAQWLSLLIHGLVAAVILLM). Topologically, residues 33–37 (PWPLS) are periplasmic. The helical transmembrane segment at 38–54 (YTPLWMVLLSLVVFDCV) threads the bilayer. Residues 55-135 (RSQRRINARQ…RILLQQETQR (81 aa)) are Cytoplasmic-facing.

In terms of assembly, interacts with MreB and FtsZ; interaction with the latter requires FtsZ residues 33-49.

It localises to the cell inner membrane. A probable inner membrane protein. Has been shown not to be a toxin, no effects on growth are seen in LB or minimal medium up to 6 or 21 hours (respectively) after induction of expression. Interacts with cytoskeletal proteins FtsZ and MreB; inhibits FtsZ GTP-dependent polymerization as well as MreB ATP-dependent polymerization. Restores production of prodigiosin antibiotic (Pig) in Serratia strains with deletions of sdhE-ygfX; overexpression of this protein and CptB also restores Pig production to a slightly lesser extent in Serratia. This Escherichia coli (strain K12) protein is Inner membrane protein YgfX.